We begin with the raw amino-acid sequence, 161 residues long: Transcription antitermination protein NusB (161 aa).

This sequence belongs to the NusB family.

Its function is as follows. Involved in transcription antitermination. Required for transcription of ribosomal RNA (rRNA) genes. Binds specifically to the boxA antiterminator sequence of the ribosomal RNA (rrn) operons. This chain is Transcription antitermination protein NusB, found in Syntrophus aciditrophicus (strain SB).